A 312-amino-acid polypeptide reads, in one-letter code: Golgi to ER traffic protein 2 (312 aa).

Residues 1-175 (MSDSPSISAE…VQYNTYRHQV (175 aa)) lie on the Cytoplasmic side of the membrane. The helical transmembrane segment at 176–196 (WKFRFLAVRYFALLANFIYHF) threads the bilayer. Residues 197–224 (YIIGDSISFASSSHQFIRELIPVEPARS) are Lumenal-facing. Residues 225 to 244 (FFTLFSTIEVVIIASYYFLG) traverse the membrane as a helical segment. Over 245–288 (TKEGFFSTATSNNFVVKLLDMGSMVLPQLQQFKTIAVRLLGYYE) the chain is Cytoplasmic. The helical transmembrane segment at 289–309 (LLAVLLGDLSLVVVLFGLHSV) threads the bilayer. At 310–312 (LGN) the chain is on the lumenal side.

This sequence belongs to the GET2 family. Component of the Golgi to ER traffic (GET) complex, which is composed of GET1, GET2 and GET3. Within the complex, GET1 and GET2 form a heterotetramer which is stabilized by phosphatidylinositol binding and which binds to the GET3 homodimer.

The protein resides in the endoplasmic reticulum membrane. Its subcellular location is the golgi apparatus membrane. In terms of biological role, required for the post-translational delivery of tail-anchored (TA) proteins to the endoplasmic reticulum. Together with GET1, acts as a membrane receptor for soluble GET3, which recognizes and selectively binds the transmembrane domain of TA proteins in the cytosol. The GET complex cooperates with the HDEL receptor ERD2 to mediate the ATP-dependent retrieval of resident ER proteins that contain a C-terminal H-D-E-L retention signal from the Golgi to the ER. The chain is Golgi to ER traffic protein 2 from Scheffersomyces stipitis (strain ATCC 58785 / CBS 6054 / NBRC 10063 / NRRL Y-11545) (Yeast).